The chain runs to 357 residues: Inositol-tetrakisphosphate 1-kinase 3 (357 aa).

1D-myo-inositol 1,3,4-trisphosphate contacts are provided by Lys56 and Lys98. 2 residues coordinate ATP: Arg133 and Lys183. 1D-myo-inositol 1,3,4-trisphosphate contacts are provided by His190 and Lys222. Residues 211–222, Ser237, and Ser262 each bind ATP; that span reads QEFVNHGGVLFK. 3 residues coordinate Mg(2+): Asp302, Asp317, and Asn319. A 1D-myo-inositol 1,3,4-trisphosphate-binding site is contributed by Asn319.

Belongs to the ITPK1 family. In terms of assembly, monomer. Requires Mg(2+) as cofactor. As to expression, expressed in roots, leaves, flowers, anthers and embryos.

The catalysed reaction is 1D-myo-inositol 3,4,5,6-tetrakisphosphate + ATP = 1D-myo-inositol 1,3,4,5,6-pentakisphosphate + ADP + H(+). The enzyme catalyses 1D-myo-inositol 1,3,4-trisphosphate + ATP = 1D-myo-inositol 1,3,4,5-tetrakisphosphate + ADP + H(+). It carries out the reaction 1D-myo-inositol 1,3,4-trisphosphate + ATP = 1D-myo-inositol 1,3,4,6-tetrakisphosphate + ADP + H(+). Functionally, kinase that can phosphorylate various inositol polyphosphate such as Ins(3,4,5,6)P4 or Ins(1,3,4)P3 and participates in phytic acid biosynthesis in developing seeds. Phytic acid is the primary storage form of phosphorus in cereal grains and other plant seeds. The sequence is that of Inositol-tetrakisphosphate 1-kinase 3 from Oryza sativa subsp. japonica (Rice).